Here is a 158-residue protein sequence, read N- to C-terminus: Endoribonuclease YbeY (158 aa).

Zn(2+) is bound by residues His118, His122, and His128.

It belongs to the endoribonuclease YbeY family. Zn(2+) serves as cofactor.

Its subcellular location is the cytoplasm. In terms of biological role, single strand-specific metallo-endoribonuclease involved in late-stage 70S ribosome quality control and in maturation of the 3' terminus of the 16S rRNA. This Bartonella quintana (strain Toulouse) (Rochalimaea quintana) protein is Endoribonuclease YbeY.